We begin with the raw amino-acid sequence, 325 residues long: MLLATALLIVGLLLVVYSADRLVFAASILCRTFGIPPLIIGMTVVSIGTSLPEVIVSLAASLHEQRDLAVGTALGSNIINILLILGLAALVRPFTVHSDVLRRELPLMLLVSVVAGSVLYDGQLSRSDGIFLLFLAVLWLLFIVKLARQAERQGTDSLTREQLAELPRDGGLPVAFLWLGIALIIMPVATRMVVDNATVLANYFAISELTMGLTAIAIGTSLPELATAIAGVRKGENDIAVGNIIGANIFNIVIVLGLPALITPGEIDPLAYSRDYSVMLLVSIIFALLCWRRSPQPGRGVGVLLTGGFIVWLAMLYWLSPILVE.

Over M1 to T5 the chain is Periplasmic. A helical transmembrane segment spans residues A6–A26. The Cytoplasmic segment spans residues S27–P37. The chain crosses the membrane as a helical span at residues L38 to L58. Residues A59–D67 are Periplasmic-facing. The chain crosses the membrane as a helical span at residues L68 to A88. Over A89–E104 the chain is Cytoplasmic. Residues L105–S125 form a helical membrane-spanning segment. A topological domain (periplasmic) is located at residue R126. The chain crosses the membrane as a helical span at residues S127–A147. Over R148–D169 the chain is Cytoplasmic. The chain crosses the membrane as a helical span at residues G170–T190. Residues R191–T198 lie on the Periplasmic side of the membrane. The chain crosses the membrane as a helical span at residues V199–G219. Residues T220 to N243 lie on the Cytoplasmic side of the membrane. A helical transmembrane segment spans residues I244–P264. The Periplasmic portion of the chain corresponds to G265–P269. Residues L270 to C290 form a helical membrane-spanning segment. Residues W291–G302 are Cytoplasmic-facing. A helical transmembrane segment spans residues V303 to L323. Residues V324 to E325 are Periplasmic-facing.

This sequence belongs to the Ca(2+):cation antiporter (CaCA) (TC 2.A.19) family.

It localises to the cell inner membrane. This chain is Inner membrane protein YrbG (yrbG), found in Escherichia coli (strain K12).